The chain runs to 48 residues: Large ribosomal subunit protein bL33A (48 aa).

The protein belongs to the bacterial ribosomal protein bL33 family.

This is Large ribosomal subunit protein bL33A from Limosilactobacillus fermentum (strain NBRC 3956 / LMG 18251) (Lactobacillus fermentum).